The sequence spans 92 residues: Small ribosomal subunit protein uS19 (92 aa).

It belongs to the universal ribosomal protein uS19 family.

Its function is as follows. Protein S19 forms a complex with S13 that binds strongly to the 16S ribosomal RNA. The polypeptide is Small ribosomal subunit protein uS19 (Rickettsia akari (strain Hartford)).